Consider the following 134-residue polypeptide: Urease subunit beta (134 aa).

Belongs to the urease beta subunit family. In terms of assembly, heterotrimer of UreA (gamma), UreB (beta) and UreC (alpha) subunits. Three heterotrimers associate to form the active enzyme.

The protein localises to the cytoplasm. It catalyses the reaction urea + 2 H2O + H(+) = hydrogencarbonate + 2 NH4(+). It functions in the pathway nitrogen metabolism; urea degradation; CO(2) and NH(3) from urea (urease route): step 1/1. The sequence is that of Urease subunit beta from Staphylococcus saprophyticus subsp. saprophyticus (strain ATCC 15305 / DSM 20229 / NCIMB 8711 / NCTC 7292 / S-41).